A 102-amino-acid polypeptide reads, in one-letter code: Small ribosomal subunit protein uS14 (102 aa).

The protein belongs to the universal ribosomal protein uS14 family. As to quaternary structure, part of the 30S ribosomal subunit. Contacts proteins S3 and S10.

In terms of biological role, binds 16S rRNA, required for the assembly of 30S particles and may also be responsible for determining the conformation of the 16S rRNA at the A site. The sequence is that of Small ribosomal subunit protein uS14 from Ehrlichia ruminantium (strain Gardel).